A 287-amino-acid polypeptide reads, in one-letter code: MKRILLFLATNLAVVLVLSVVLNIVYAVTGMQPGSLSGLLVMAAVFGFGGAFISLLMSKSMALRSVGGVVIDTPRNEMEHWLLETVRRQANQAGIGMPTVAIYDAPDMNAFATGAKRDDSLVAVSTGLLHNMTRDEAEAVLAHEVSHIANGDMVTMTLMQGVVNTFVIFLSRFIANIVASRDSEEGEGSNMMVYFGVSMVLELVFGFLASFITMWYSRHREFHADAGAAQLVGKHKMIAALERLKMGQESHLEGSMMAFGITGKRSLSELMMTHPPLEKRIAALRNM.

The next 2 helical transmembrane spans lie at 4–24 (ILLF…VLNI) and 36–56 (LSGL…ISLL). His-143 serves as a coordination point for Zn(2+). Glu-144 is an active-site residue. His-147 serves as a coordination point for Zn(2+). The next 2 membrane-spanning stretches (helical) occupy residues 158–178 (LMQG…ANIV) and 192–212 (MVYF…ASFI). Position 221 (Glu-221) interacts with Zn(2+).

Belongs to the peptidase M48B family. Zn(2+) serves as cofactor.

The protein localises to the cell inner membrane. This is Protease HtpX from Vibrio cholerae serotype O1 (strain ATCC 39315 / El Tor Inaba N16961).